A 124-amino-acid chain; its full sequence is Protein MGF 110-4L (124 aa).

The N-terminal stretch at methionine 1–arginine 28 is a signal peptide. Residue asparagine 64 is glycosylated (N-linked (GlcNAc...) asparagine; by host). Positions lysine 121–leucine 124 match the Prevents secretion from ER motif.

This sequence belongs to the asfivirus MGF 110 family.

Its subcellular location is the virion. The protein localises to the host endoplasmic reticulum-Golgi intermediate compartment. Its function is as follows. Causes the redistribution of lumenal ER protein to an enlarged ERGIC compartment. This is Protein MGF 110-4L from African swine fever virus (strain Badajoz 1971 Vero-adapted) (Ba71V).